The primary structure comprises 393 residues: Branched-chain-amino-acid aminotransferase, mitochondrial (393 aa).

The transit peptide at 1–16 (MLQRHSLKLGKFSIRT) directs the protein to the mitochondrion. Lys219 bears the N6-(pyridoxal phosphate)lysine mark. Thr315 is subject to Phosphothreonine.

The protein belongs to the class-IV pyridoxal-phosphate-dependent aminotransferase family. Pyridoxal 5'-phosphate serves as cofactor.

It localises to the mitochondrion matrix. It catalyses the reaction L-leucine + 2-oxoglutarate = 4-methyl-2-oxopentanoate + L-glutamate. The catalysed reaction is L-isoleucine + 2-oxoglutarate = (S)-3-methyl-2-oxopentanoate + L-glutamate. The enzyme catalyses L-valine + 2-oxoglutarate = 3-methyl-2-oxobutanoate + L-glutamate. It carries out the reaction a 2-oxocarboxylate + L-methionine = 4-methylsulfanyl-2-oxobutanoate + an L-alpha-amino acid. Its pathway is amino-acid biosynthesis; L-isoleucine biosynthesis; L-isoleucine from 2-oxobutanoate: step 4/4. It participates in amino-acid biosynthesis; L-leucine biosynthesis; L-leucine from 3-methyl-2-oxobutanoate: step 4/4. It functions in the pathway amino-acid biosynthesis; L-valine biosynthesis; L-valine from pyruvate: step 4/4. The protein operates within amino-acid biosynthesis; L-methionine biosynthesis via salvage pathway; L-methionine from S-methyl-5-thio-alpha-D-ribose 1-phosphate: step 6/6. Mitochondrial isozyme of branched-chain-amino-acid aminotransferase, involved in the biosynthesis of the branched chain amino acids (BCAAs) leucine, isoleucine, and valine. Catalyzes the formation of methionine from 2-keto-4-methylthiobutyrate (KMTB) in the methionine salvage pathway primarily using BCAAs (leucine, isoleucine, and valine) as the amino donors. Appears to be involved in the regulation of the cell cycle, although this may be indirect via metabolic changes. Connects BCAAs and TCA-cycle metabolism governing TCA-cycle flux to activate TORC1 signaling. High copy suppressor of a temperature-sensitive mutation in the ABC transporter, ATM1. The chain is Branched-chain-amino-acid aminotransferase, mitochondrial from Saccharomyces cerevisiae (strain ATCC 204508 / S288c) (Baker's yeast).